Consider the following 927-residue polypeptide: GPI inositol-deacylase (927 aa).

Over 1–4 (MNPL) the chain is Cytoplasmic. The helical transmembrane segment at 5-25 (SAVFNSVVLVLLALGVTDVFF) threads the bilayer. Topologically, residues 26-595 (SYESSRCSMT…QIVRFHGIYL (570 aa)) are lumenal. Asn75 and Asn155 each carry an N-linked (GlcNAc...) asparagine glycan. The active site involves Ser169. N-linked (GlcNAc...) asparagine glycosylation is found at Asn230, Asn362, Asn397, Asn432, Asn444, and Asn482. The helical transmembrane segment at 596–616 (PVYIVANLLLAYGAQLHSILI) threads the bilayer. Over 617–672 (QGSCMDLDLSFDVAAKPYKVDPVLIICKYLLNYKWFKNYWDGLMLPQLDAVQLHAY) the chain is Cytoplasmic. The helical transmembrane segment at 673-693 (GFWFPLASLFFFIFGTSIAYW) threads the bilayer. At 694 to 733 (SSIGLQAAVRILSSLWIYLKRPSMFPKESKCITYRVYAET) the chain is on the lumenal side. The helical transmembrane segment at 734-754 (LFFAFISWRSCGTFSLLLVFL) threads the bilayer. Over 755 to 821 (RYLSKVLILY…KALDDCLKMH (67 aa)) the chain is Cytoplasmic. Residues 822–842 (FTILHLNLWIVLLGLPSFIYW) form a helical membrane-spanning segment. The Lumenal portion of the chain corresponds to 843–858 (LKTLRYTIQLDPDPNR). Residues 859-879 (VSALVLIFILEILMNSTTSAI) form a helical membrane-spanning segment. Topologically, residues 880-887 (KSSVCLKT) are cytoplasmic. The chain crosses the membrane as a helical span at residues 888–908 (AAVLQLPLSIIVVAFGTLHLY). Topologically, residues 909–927 (RISNLIAFSLFLHVVCCFV) are lumenal.

It belongs to the GPI inositol-deacylase family.

It is found in the endoplasmic reticulum membrane. In terms of biological role, GPI inositol-deacylase that catalyzes the remove of the acyl chain linked to the 2-OH position of inositol ring from the GPI-anchored protein (GPI-AP) in the endoplasmic reticulum. Initiates the post-attachment remodeling phase of GPI-AP biogenesis and participates in endoplasmic reticulum (ER)-to-Golgi transport of GPI-anchored protein. This is GPI inositol-deacylase from Xenopus laevis (African clawed frog).